The chain runs to 251 residues: tRNA (guanine-N(1)-)-methyltransferase (251 aa).

Residues Gly-111 and 131–136 contribute to the S-adenosyl-L-methionine site; that span reads LGDFVL.

It belongs to the RNA methyltransferase TrmD family. As to quaternary structure, homodimer.

The protein resides in the cytoplasm. It carries out the reaction guanosine(37) in tRNA + S-adenosyl-L-methionine = N(1)-methylguanosine(37) in tRNA + S-adenosyl-L-homocysteine + H(+). Functionally, specifically methylates guanosine-37 in various tRNAs. The chain is tRNA (guanine-N(1)-)-methyltransferase from Synechococcus sp. (strain JA-2-3B'a(2-13)) (Cyanobacteria bacterium Yellowstone B-Prime).